We begin with the raw amino-acid sequence, 231 residues long: 7-cyano-7-deazaguanine synthase (231 aa).

8–18 is a binding site for ATP; sequence FSGGQDSTTCL. Cys-188, Cys-197, Cys-200, and Cys-203 together coordinate Zn(2+).

The protein belongs to the QueC family. It depends on Zn(2+) as a cofactor.

The enzyme catalyses 7-carboxy-7-deazaguanine + NH4(+) + ATP = 7-cyano-7-deazaguanine + ADP + phosphate + H2O + H(+). Its pathway is purine metabolism; 7-cyano-7-deazaguanine biosynthesis. Its function is as follows. Catalyzes the ATP-dependent conversion of 7-carboxy-7-deazaguanine (CDG) to 7-cyano-7-deazaguanine (preQ(0)). The polypeptide is 7-cyano-7-deazaguanine synthase (Salmonella newport (strain SL254)).